Consider the following 371-residue polypeptide: Chaperone protein DnaJ (371 aa).

The J domain occupies 5-70 (DYYEVLGVNR…QKRAAYDQYG (66 aa)). Residues 31 to 52 (KYHPDRNPDNPKAEESFKEAKE) form a disordered region. Residues 32–52 (YHPDRNPDNPKAEESFKEAKE) are compositionally biased toward basic and acidic residues. Residues 132-210 (RTETKIRIPV…CQGAGRVKKH (79 aa)) form a CR-type zinc finger. Zn(2+) is bound by residues C145, C148, C162, C165, C184, C187, C198, and C201. CXXCXGXG motif repeat units follow at residues 145–152 (CETCHGSG), 162–169 (CTTCGGHG), 184–191 (CPKCHGSG), and 198–205 (CPSCQGAG).

It belongs to the DnaJ family. As to quaternary structure, homodimer. The cofactor is Zn(2+).

It is found in the cytoplasm. Its function is as follows. Participates actively in the response to hyperosmotic and heat shock by preventing the aggregation of stress-denatured proteins and by disaggregating proteins, also in an autonomous, DnaK-independent fashion. Unfolded proteins bind initially to DnaJ; upon interaction with the DnaJ-bound protein, DnaK hydrolyzes its bound ATP, resulting in the formation of a stable complex. GrpE releases ADP from DnaK; ATP binding to DnaK triggers the release of the substrate protein, thus completing the reaction cycle. Several rounds of ATP-dependent interactions between DnaJ, DnaK and GrpE are required for fully efficient folding. Also involved, together with DnaK and GrpE, in the DNA replication of plasmids through activation of initiation proteins. The protein is Chaperone protein DnaJ of Methylovorus sp. (strain SS1 / DSM 11726).